The sequence spans 989 residues: ATP-dependent 6-phosphofructokinase subunit alpha (989 aa).

The segment at 1–585 is N-terminal catalytic PFK domain 1; that stretch reads MPEPSISDLS…SYENFLSVSK (585 aa). Residues G220, 283–284, and 313–316 each bind ATP; these read RC and GDGS. D314 is a binding site for Mg(2+). Residues 359–361, R396, 403–405, E460, R487, and 493–496 each bind beta-D-fructose 6-phosphate; these read SID, MGR, and HVQR. D361 acts as the Proton acceptor in catalysis. Residues 586–599 form an interdomain linker region; it reads YDDGSYLVPESSRL. Residues 600 to 989 are C-terminal regulatory PFK domain 2; the sequence is NIAIIHVGAP…LSGRLSIRTT (390 aa). Residues R670, 727 to 731, R765, 772 to 774, E832, R858, 864 to 867, and R963 each bind beta-D-fructose 2,6-bisphosphate; these read TVSNN, QGG, and HVQQ.

This sequence belongs to the phosphofructokinase type A (PFKA) family. ATP-dependent PFK group I subfamily. Eukaryotic two domain clade 'E' sub-subfamily. As to quaternary structure, heterododecamer of 4 alpha, 4 beta and 4 gamma chains. Mg(2+) is required as a cofactor.

The protein resides in the cytoplasm. It carries out the reaction beta-D-fructose 6-phosphate + ATP = beta-D-fructose 1,6-bisphosphate + ADP + H(+). It participates in carbohydrate degradation; glycolysis; D-glyceraldehyde 3-phosphate and glycerone phosphate from D-glucose: step 3/4. Allosterically activated by ADP, AMP, or fructose 2,6-bisphosphate, and allosterically inhibited by ATP or citrate. In terms of biological role, catalyzes the phosphorylation of D-fructose 6-phosphate to fructose 1,6-bisphosphate by ATP, the first committing step of glycolysis. This is ATP-dependent 6-phosphofructokinase subunit alpha (PFK1) from Komagataella pastoris (Yeast).